A 120-amino-acid chain; its full sequence is Large ribosomal subunit protein bL19 (120 aa).

The protein belongs to the bacterial ribosomal protein bL19 family.

This protein is located at the 30S-50S ribosomal subunit interface and may play a role in the structure and function of the aminoacyl-tRNA binding site. This is Large ribosomal subunit protein bL19 from Microcystis aeruginosa (strain NIES-843 / IAM M-2473).